The following is a 274-amino-acid chain: 3-methyl-2-oxobutanoate hydroxymethyltransferase (274 aa).

Asp-49 and Asp-88 together coordinate Mg(2+). 3-methyl-2-oxobutanoate contacts are provided by residues 49-50 (DS), Asp-88, and Lys-118. Glu-120 is a binding site for Mg(2+). Catalysis depends on Glu-187, which acts as the Proton acceptor.

Belongs to the PanB family. In terms of assembly, homodecamer; pentamer of dimers. The cofactor is Mg(2+).

It localises to the cytoplasm. The catalysed reaction is 3-methyl-2-oxobutanoate + (6R)-5,10-methylene-5,6,7,8-tetrahydrofolate + H2O = 2-dehydropantoate + (6S)-5,6,7,8-tetrahydrofolate. It functions in the pathway cofactor biosynthesis; (R)-pantothenate biosynthesis; (R)-pantoate from 3-methyl-2-oxobutanoate: step 1/2. Its function is as follows. Catalyzes the reversible reaction in which hydroxymethyl group from 5,10-methylenetetrahydrofolate is transferred onto alpha-ketoisovalerate to form ketopantoate. The chain is 3-methyl-2-oxobutanoate hydroxymethyltransferase from Allorhizobium ampelinum (strain ATCC BAA-846 / DSM 112012 / S4) (Agrobacterium vitis (strain S4)).